The chain runs to 618 residues: UvrABC system protein C (618 aa).

Residues 13-92 enclose the GIY-YIG domain; it reads DKPGVYLMKN…IKKYRPKYNI (80 aa). A UVR domain is found at 204–239; sequence LDIVENFKLNMEKAAGNLEFEKAAMLRDKINIIEKI.

The protein belongs to the UvrC family. As to quaternary structure, interacts with UvrB in an incision complex.

The protein localises to the cytoplasm. The UvrABC repair system catalyzes the recognition and processing of DNA lesions. UvrC both incises the 5' and 3' sides of the lesion. The N-terminal half is responsible for the 3' incision and the C-terminal half is responsible for the 5' incision. This Clostridium botulinum (strain 657 / Type Ba4) protein is UvrABC system protein C.